A 257-amino-acid polypeptide reads, in one-letter code: MLHNIRIVLVETSHTGNMGSTARAMKTMGLTNLYLVNPLVKPDSQAIALSAGASDVIGNATIVDTLDEALAGCSLVVGTSARSRTLPWPMLEPRECGVRSAREAEHAPVALVFGRERVGLTNDELQKCHYHVAIPANPEYSSLNLAMAVQILAYEVRVAFLDRQQAAAPIVEEEEAPYPLVDDLERFYLHLEQVLSHTGFIRQAHPGQIMSKLRRLFTRARPEAQELNILRGMLTSIEKQDKYPQRGADGSEHNGKN.

S-adenosyl-L-methionine contacts are provided by residues T79 to A81, G114, I134, and S141 to L143.

It belongs to the class IV-like SAM-binding methyltransferase superfamily. RNA methyltransferase TrmH family. As to quaternary structure, homodimer.

The protein resides in the cytoplasm. The enzyme catalyses cytidine(32) in tRNA + S-adenosyl-L-methionine = 2'-O-methylcytidine(32) in tRNA + S-adenosyl-L-homocysteine + H(+). The catalysed reaction is uridine(32) in tRNA + S-adenosyl-L-methionine = 2'-O-methyluridine(32) in tRNA + S-adenosyl-L-homocysteine + H(+). In terms of biological role, catalyzes the formation of 2'O-methylated cytidine (Cm32) or 2'O-methylated uridine (Um32) at position 32 in tRNA. This Yersinia enterocolitica serotype O:8 / biotype 1B (strain NCTC 13174 / 8081) protein is tRNA (cytidine/uridine-2'-O-)-methyltransferase TrmJ (trmJ).